Consider the following 375-residue polypeptide: MTDVELRVEALSLSGVSAIPPEYVRPEEERADLGDALELARAASDDDATARIPVVDISAFDNDGDGRHACVEAVRAAAEEWGVIHIAGHGLPGDVLGRLRAAGEAFFALPIAEKEAYANDPAAGRLQGYGSKLAANASGKREWEDYLFHLVHPDHLADHSLWPANPPEYVPVSRDFGGRVRTLASKLLAILSLGLGLPEETLERRLRGHELAGVDDDLLLQLKINYYPRCPRPDLAVGVEAHTDVSALSFILHNGVPGLQVHHAGSWVTARPEPGTIVVHVGDALEILTNGRYTSVLHRGLVSRDAVRLSWVVFCEPPPESVLLQPVQELLADGAGKPLFAPRTFKQHVQRKLFKKLKDQQDNNAAAASNGMITK.

In terms of domain architecture, Fe2OG dioxygenase spans 218 to 317 (LLLQLKINYY…RLSWVVFCEP (100 aa)). Fe cation-binding residues include His-242, Asp-244, and His-298. Arg-308 provides a ligand contact to 2-oxoglutarate.

It belongs to the iron/ascorbate-dependent oxidoreductase family. L-ascorbate serves as cofactor. The cofactor is Fe(2+).

It catalyses the reaction a (2R,3S,4S)-leucoanthocyanidin + 2-oxoglutarate + O2 = a 4-H-anthocyanidin with a 3-hydroxy group + succinate + CO2 + 2 H2O. The protein operates within pigment biosynthesis; anthocyanin biosynthesis. Functionally, involved in anthocyanin and protoanthocyanidin biosynthesis by catalyzing the oxidation of leucoanthocyanidins into anthocyanidins. Is able to synthesize anthocyanin pigments from leucoanthocyanidins in aleurone tissue. Converts dihydroquercetin to quercetin in vitro. The polypeptide is Leucoanthocyanidin dioxygenase 1 (Oryza sativa subsp. indica (Rice)).